The following is an 81-amino-acid chain: Beta-catenin-interacting protein 1 (81 aa).

Residue S59 is modified to Phosphoserine.

The protein belongs to the CTNNBIP1 family. Binds CTNNB1.

The protein resides in the cytoplasm. Its subcellular location is the nucleus. Its function is as follows. Prevents the interaction between CTNNB1 and TCF family members, and acts as a negative regulator of the Wnt signaling pathway. The chain is Beta-catenin-interacting protein 1 (CTNNBIP1) from Bos taurus (Bovine).